Consider the following 172-residue polypeptide: ATP synthase subunit b (172 aa).

The chain crosses the membrane as a helical span at residues 18 to 38 (IVWSLIILVIVAVFFYKFFMP).

Belongs to the ATPase B chain family. In terms of assembly, F-type ATPases have 2 components, F(1) - the catalytic core - and F(0) - the membrane proton channel. F(1) has five subunits: alpha(3), beta(3), gamma(1), delta(1), epsilon(1). F(0) has three main subunits: a(1), b(2) and c(10-14). The alpha and beta chains form an alternating ring which encloses part of the gamma chain. F(1) is attached to F(0) by a central stalk formed by the gamma and epsilon chains, while a peripheral stalk is formed by the delta and b chains.

The protein localises to the cell membrane. Its function is as follows. F(1)F(0) ATP synthase produces ATP from ADP in the presence of a proton or sodium gradient. F-type ATPases consist of two structural domains, F(1) containing the extramembraneous catalytic core and F(0) containing the membrane proton channel, linked together by a central stalk and a peripheral stalk. During catalysis, ATP synthesis in the catalytic domain of F(1) is coupled via a rotary mechanism of the central stalk subunits to proton translocation. Component of the F(0) channel, it forms part of the peripheral stalk, linking F(1) to F(0). In Bifidobacterium longum (strain DJO10A), this protein is ATP synthase subunit b.